Consider the following 445-residue polypeptide: Histone acetyltransferase of the MYST family 2 (445 aa).

Polar residues predominate over residues 1-23 (MGSSANTETNGNAPPPSSNQKPP). Residues 1–58 (MGSSANTETNGNAPPPSSNQKPPATNGVDGSHPPPPPLTPDQAIIESDPSKKRKMGML) are disordered. Positions 60–118 (LEVGTRVMCRWRDGKHHPVKVIERRRIHNGGQNDYEYYVHYTEFNRRLDEWTQLDQLDL) constitute a Tudor-knot domain. The MYST-type HAT domain maps to 169 to 440 (TKVKNISTIE…VDASKLIWTP (272 aa)). The C2HC MYST-type zinc-finger motif lies at 202 to 227 (LFFCEFCLNFMKRKEQLQRHMRKCDL). The residue at position 269 (Lys-269) is an N6-acetyllysine; by autocatalysis. Residues 312–314 (ILT) and 319–325 (QRKGYGK) contribute to the acetyl-CoA site. Catalysis depends on Glu-345, which acts as the Proton donor/acceptor. Residue Ser-349 participates in acetyl-CoA binding.

Belongs to the MYST (SAS/MOZ) family. As to quaternary structure, interacts with MRG1 and MRG2. Post-translationally, autoacetylation at Lys-269 is required for proper function. Expressed in cotyledons, leaves, stems, roots and, at higher levels in developing flowers, particularly in the anthers and gynoecia. Constitutively expressed in all tissues, predominantly in shoot apical meristem.

The protein localises to the nucleus. The catalysed reaction is L-lysyl-[protein] + acetyl-CoA = N(6)-acetyl-L-lysyl-[protein] + CoA + H(+). In terms of biological role, histone acetyltransferase which may be involved in transcriptional activation. Acetylates 'Lys-5' of histone H4 (H4K5ac). Essential for gametophyte development. Negative regulator of flowering controlling the H4K5ac levels in the FLC chromatin. The protein is Histone acetyltransferase of the MYST family 2 of Arabidopsis thaliana (Mouse-ear cress).